The primary structure comprises 476 residues: Cytochrome c oxidase subunit 1 (476 aa).

The chain crosses the membrane as a helical span at residues 19–39 (LYYLWFSFLFGIYGFLLSVIL). E42 serves as a coordination point for Ca(2+). Helical transmembrane passes span 61–81 (MIFTVHGIIMIFFNIMPGLFG), 105–125 (ISLLLQPIAFILVILSTAAEF), 144–164 (LSPVAVDVIVIGLLVSGIASI), 194–214 (LIITSIMLLLTLPVLTGGVLM), 240–260 (LLWFFGHPEVYILILPAFGII), 278–298 (MILAMGCIAVLGSVVWVHHMY), 309–329 (FFTSTTILISIPTGTKVFNWL), and 345–365 (LLSLLFICTFTFGGTTGVILG). Residue H66 coordinates Fe(II)-heme a. Residue H246 coordinates Cu cation. The 1'-histidyl-3'-tyrosine (His-Tyr) cross-link spans 246–250 (HPEVY). Y250 is an O2 binding site. Positions 295 and 296 each coordinate Cu cation. Mg(2+) is bound by residues H374 and D375. The next 2 helical transmembrane spans lie at 379–399 (VIAHFHFVLSIGAIIALFTSV) and 415–435 (TIIVLWSILFFVGVVLTFLPM). A heme a3-binding site is contributed by H382. H384 provides a ligand contact to Fe(II)-heme a. Ca(2+) is bound at residue P448. A helical membrane pass occupies residues 455-475 (NGWNMICSIGSTMTLFGLLIF).

Belongs to the heme-copper respiratory oxidase family. Component of the cytochrome c oxidase (complex IV, CIV), a multisubunit enzyme composed of a catalytic core of 3 subunits and several supernumerary subunits. The complex exists as a monomer or a dimer and forms supercomplexes (SCs) in the inner mitochondrial membrane with ubiquinol-cytochrome c oxidoreductase (cytochrome b-c1 complex, complex III, CIII). Heme is required as a cofactor. The cofactor is Cu cation.

It is found in the mitochondrion inner membrane. It catalyses the reaction 4 Fe(II)-[cytochrome c] + O2 + 8 H(+)(in) = 4 Fe(III)-[cytochrome c] + 2 H2O + 4 H(+)(out). The protein operates within energy metabolism; oxidative phosphorylation. Functionally, component of the cytochrome c oxidase, the last enzyme in the mitochondrial electron transport chain which drives oxidative phosphorylation. The respiratory chain contains 3 multisubunit complexes succinate dehydrogenase (complex II, CII), ubiquinol-cytochrome c oxidoreductase (cytochrome b-c1 complex, complex III, CIII) and cytochrome c oxidase (complex IV, CIV), that cooperate to transfer electrons derived from NADH and succinate to molecular oxygen, creating an electrochemical gradient over the inner membrane that drives transmembrane transport and the ATP synthase. Cytochrome c oxidase is the component of the respiratory chain that catalyzes the reduction of oxygen to water. Electrons originating from reduced cytochrome c in the intermembrane space (IMS) are transferred via the dinuclear copper A center (CU(A)) of subunit 2 and heme A of subunit 1 to the active site in subunit 1, a binuclear center (BNC) formed by heme A3 and copper B (CU(B)). The BNC reduces molecular oxygen to 2 water molecules using 4 electrons from cytochrome c in the IMS and 4 protons from the mitochondrial matrix. In Plasmodium chabaudi, this protein is Cytochrome c oxidase subunit 1 (COI).